The sequence spans 398 residues: Phosphoglycerate kinase (398 aa).

Substrate contacts are provided by residues 24-26, Arg-40, 63-66, Arg-122, and Arg-155; these read DFN and HMGR. ATP-binding positions include Lys-206, Gly-294, Glu-325, and 354-357; that span reads GGDS.

Belongs to the phosphoglycerate kinase family. As to quaternary structure, monomer.

It is found in the cytoplasm. It carries out the reaction (2R)-3-phosphoglycerate + ATP = (2R)-3-phospho-glyceroyl phosphate + ADP. It participates in carbohydrate degradation; glycolysis; pyruvate from D-glyceraldehyde 3-phosphate: step 2/5. This is Phosphoglycerate kinase from Picosynechococcus sp. (strain ATCC 27264 / PCC 7002 / PR-6) (Agmenellum quadruplicatum).